The primary structure comprises 366 residues: NADH-quinone oxidoreductase subunit D (366 aa).

The protein belongs to the complex I 49 kDa subunit family. As to quaternary structure, NDH-1 is composed of 14 different subunits. Subunits NuoB, C, D, E, F, and G constitute the peripheral sector of the complex.

It localises to the cell membrane. It carries out the reaction a quinone + NADH + 5 H(+)(in) = a quinol + NAD(+) + 4 H(+)(out). Its function is as follows. NDH-1 shuttles electrons from NADH, via FMN and iron-sulfur (Fe-S) centers, to quinones in the respiratory chain. The immediate electron acceptor for the enzyme in this species is believed to be a menaquinone. Couples the redox reaction to proton translocation (for every two electrons transferred, four hydrogen ions are translocated across the cytoplasmic membrane), and thus conserves the redox energy in a proton gradient. In Geobacillus thermodenitrificans (strain NG80-2), this protein is NADH-quinone oxidoreductase subunit D.